The chain runs to 307 residues: MAHPHLDKVKEYLLDLQDRLCDGLAAEEGDTAFREDSWTREAGGGGRSRVIENGEVFEKGGVNFSHVFGERLPASASAARPELAGRSFHAVGVSWVLHPRNPHVPTAHGNVRFFIAEKEGAEPVWWFGGGFDLTPFYPVFEDVVHWHRVAQETCAPFGDDVYPRFKRWCDEYFTLHHRDETRGVGGLFFDDLNEWEFERCFAFQRAVGDAFLEAYVPIVRRRQATEYGERERDFQAFRRGRYVEFNLVWDRGTLFGLQSGGRTESILMSMPPLAQWQYCWTPEPGSPEARLADEFLTPREWLEEAEA.

Ser94 contacts substrate. Residues His98 and His108 each contribute to the a divalent metal cation site. His108 acts as the Proton donor in catalysis. 110 to 112 (NVR) lines the substrate pocket. Residues His147 and His177 each contribute to the a divalent metal cation site. Residues 242 to 277 (YVEFNLVWDRGTLFGLQSGGRTESILMSMPPLAQWQ) are important for dimerization. 260–262 (GGR) contributes to the substrate binding site.

Belongs to the aerobic coproporphyrinogen-III oxidase family. Homodimer. The cofactor is a divalent metal cation.

It is found in the cytoplasm. The catalysed reaction is coproporphyrinogen III + O2 + 2 H(+) = protoporphyrinogen IX + 2 CO2 + 2 H2O. The protein operates within porphyrin-containing compound metabolism; protoporphyrin-IX biosynthesis; protoporphyrinogen-IX from coproporphyrinogen-III (O2 route): step 1/1. In terms of biological role, involved in the heme biosynthesis. Catalyzes the aerobic oxidative decarboxylation of propionate groups of rings A and B of coproporphyrinogen-III to yield the vinyl groups in protoporphyrinogen-IX. This chain is Oxygen-dependent coproporphyrinogen-III oxidase, found in Chromohalobacter salexigens (strain ATCC BAA-138 / DSM 3043 / CIP 106854 / NCIMB 13768 / 1H11).